The following is a 337-amino-acid chain: Quinolinate synthase (337 aa).

Residues His40 and Ser57 each contribute to the iminosuccinate site. Cys102 contacts [4Fe-4S] cluster. Residues 128-130 (YVN) and Ser145 contribute to the iminosuccinate site. Position 189 (Cys189) interacts with [4Fe-4S] cluster. Residues 215–217 (HPE) and Thr243 each bind iminosuccinate. Position 288 (Cys288) interacts with [4Fe-4S] cluster.

It belongs to the quinolinate synthase family. Type 2 subfamily. The cofactor is [4Fe-4S] cluster.

The protein resides in the cytoplasm. It catalyses the reaction iminosuccinate + dihydroxyacetone phosphate = quinolinate + phosphate + 2 H2O + H(+). Its pathway is cofactor biosynthesis; NAD(+) biosynthesis; quinolinate from iminoaspartate: step 1/1. Functionally, catalyzes the condensation of iminoaspartate with dihydroxyacetone phosphate to form quinolinate. The sequence is that of Quinolinate synthase from Mycobacterium sp. (strain JLS).